The sequence spans 546 residues: MKADNRNRTSVAIVGAGPNGAALANLLGLYGVDTVVVERAPQIVDFPRAVGIDDEALRLFQTAGVADELSRDIIQNVPLRMFNARGECFADVRPSVREFGWWRRNIFMQHLAERTLRDALARYPHVSLRTGEEVVGLEQDDAHVTLRVQGADGQHYALDADYVVAADGGRSPLREMLGIPLAGTTHPMKWVVVDVKNAGLDQPCTALNCDPRRPNVCIYLPFNYRRWEFLVFPHEDEQAIAQPESIRALIAPYVEDVERLEIVRARTYTHHSRVAERFVAGRIALVGDAAHLSPPWIGQGLNAGLRDVGNLAWKLAGIVHGRLNPGVLATYESERRAHAKAMIDLADTFGAMLMPTSRPVAFLRDRLLAAARFAPGLKDYVLQMRFKPMPSYTRGVVVTGASDASGAIGRMIVQPDVETADGVRRKLDDVLGPWFSIIGWQCDPQASLSDDERAFWTALGAKFVQIVRSRSGTCREQRIASAHGSECVEDVDNAMADWFDRHAGPLVVVRPDRYVAAQTDAVGIAGVTAAFRAFAPQQQAEAAHVC.

Residues 10 to 39 (SVAI…VVER) and 278 to 288 (FVAGRIALVGD) contribute to the FAD site.

This sequence belongs to the PheA/TfdB FAD monooxygenase family. The cofactor is FAD.

The catalysed reaction is 3-(3-hydroxyphenyl)propanoate + NADH + O2 + H(+) = 3-(2,3-dihydroxyphenyl)propanoate + NAD(+) + H2O. It carries out the reaction (2E)-3-(3-hydroxyphenyl)prop-2-enoate + NADH + O2 + H(+) = (2E)-3-(2,3-dihydroxyphenyl)prop-2-enoate + NAD(+) + H2O. It participates in aromatic compound metabolism; 3-phenylpropanoate degradation. Functionally, catalyzes the insertion of one atom of molecular oxygen into position 2 of the phenyl ring of 3-(3-hydroxyphenyl)propionate (3-HPP) and hydroxycinnamic acid (3HCI). This is 3-(3-hydroxy-phenyl)propionate/3-hydroxycinnamic acid hydroxylase 2 from Burkholderia vietnamiensis (strain G4 / LMG 22486) (Burkholderia cepacia (strain R1808)).